Consider the following 792-residue polypeptide: DNA mismatch repair protein MSH4 (792 aa).

Position 553–560 (553–560) interacts with ATP; that stretch reads GPNMSGKS.

The protein belongs to the DNA mismatch repair MutS family. Specifically expressed in flowers.

It localises to the nucleus. Functionally, involved in meiotic recombination in association with MSH5. Required for reciprocal recombination and proper segregation of homologous chromosomes at meiosis. Promotes homologous recombination through facilitating chiasma formation during prophase I. Involved in the control of class I crossovers formation. This chain is DNA mismatch repair protein MSH4 (MSH4), found in Arabidopsis thaliana (Mouse-ear cress).